The sequence spans 419 residues: UDP-N-acetylglucosamine 1-carboxyvinyltransferase (419 aa).

22–23 (KN) is a phosphoenolpyruvate binding site. Residue Arg-95 participates in UDP-N-acetyl-alpha-D-glucosamine binding. Cys-119 acts as the Proton donor in catalysis. Cys-119 is subject to 2-(S-cysteinyl)pyruvic acid O-phosphothioketal. UDP-N-acetyl-alpha-D-glucosamine contacts are provided by residues 164 to 167 (KVSV), Asp-308, and Ile-330.

This sequence belongs to the EPSP synthase family. MurA subfamily.

The protein resides in the cytoplasm. It carries out the reaction phosphoenolpyruvate + UDP-N-acetyl-alpha-D-glucosamine = UDP-N-acetyl-3-O-(1-carboxyvinyl)-alpha-D-glucosamine + phosphate. It participates in cell wall biogenesis; peptidoglycan biosynthesis. Its function is as follows. Cell wall formation. Adds enolpyruvyl to UDP-N-acetylglucosamine. This chain is UDP-N-acetylglucosamine 1-carboxyvinyltransferase, found in Rickettsia conorii (strain ATCC VR-613 / Malish 7).